The sequence spans 64 residues: Metallothionein (64 aa).

Belongs to the metallothionein superfamily. Type 4 family.

Its function is as follows. Metallothioneins have a high content of cysteine residues that bind various heavy metals. The sequence is that of Metallothionein from Sterechinus neumayeri (Antarctic sea urchin).